We begin with the raw amino-acid sequence, 1232 residues long: Protein transport protein sec-16A.1 (1232 aa).

6 disordered regions span residues 18 to 134 (GASG…SGYA), 172 to 193 (RNGF…EEDE), 815 to 843 (PVQE…KWHD), 866 to 942 (KPIA…VVPE), 972 to 1069 (QPIP…PQKQ), and 1140 to 1232 (PHLM…QNND). Over residues 26–37 (DWNNPYNASPPS) the composition is skewed to polar residues. Positions 67-76 (RPILIQPARP) are enriched in low complexity. The segment covering 78–100 (SQKSNRQGTGMSNGSRGLNSTFN) has biased composition (polar residues). Residues 817–836 (QESQQHVPQPQPVENKSISS) show a composition bias toward polar residues. Positions 896–914 (SSVTVAASASRTSTLTSST) are enriched in low complexity. Composition is skewed to polar residues over residues 1046-1060 (QQAT…NAKT), 1149-1159 (SNKSSTNSLRS), and 1168-1178 (YLQSGMATSQA). Over residues 1194-1203 (PMSFSFMPAP) the composition is skewed to low complexity. Positions 1222–1232 (PSESLSKQNND) are enriched in polar residues.

Belongs to the SEC16 family. In terms of assembly, interacts with tfg-1 (via N-terminus); the interaction is direct and is required for both the localization of tfg-1 and to maintain the distribution of sec-16A.1 at endoplasmic reticulum exit sites (ERES).

It localises to the endoplasmic reticulum. It is found in the endoplasmic reticulum-Golgi intermediate compartment. Functionally, plays a role in the organization of the endoplasmic reticulum exit sites (ERES), also known as transitional endoplasmic reticulum (tER). In association with tfg-1, accumulates at ERES to positively regulate secretory cargo trafficking from the endoplasmic reticulum to the endoplasmic reticulum-Golgi intermediate compartment (ERGIC) and Golgi apparatus. This Caenorhabditis elegans protein is Protein transport protein sec-16A.1.